A 213-amino-acid chain; its full sequence is Transcriptional regulatory protein CrdR (213 aa).

The Response regulatory domain maps to 4-119; it reads KIFLLEDDYL…ELEARIKRFF (116 aa). The residue at position 53 (D53) is a 4-aspartylphosphate. The segment at residues 121-212 is a DNA-binding region (ompR/PhoB-type); that stretch reads DDPIEIMPNI…HKGVGYRFNP (92 aa).

In terms of processing, phosphorylated by CrdS.

Functionally, member of the two-component regulatory system CrdR/CrdS that induces the transcriptional induction of the copper resistance determinant CrdA. Upon phosphorylation by CrdS, functions as a transcriptional regulator by direct binding to promoter regions of target genes including the crdA promoter or nitric oxide-responsive gene promoters. In Helicobacter pylori (strain ATCC 700392 / 26695) (Campylobacter pylori), this protein is Transcriptional regulatory protein CrdR.